A 495-amino-acid polypeptide reads, in one-letter code: Tripartite motif-containing protein 5 (495 aa).

Residue Ala-2 is modified to N-acetylalanine. An RING-type zinc finger spans residues 15–60 (CPICLELLTEPLSLPCGHSFCQACITANHKKSMLYKEEERSCPVCR). At Ser-87 the chain carries Phosphoserine. Residues 92–133 (QKVDHCARHGEKLLLFCQEDRKVICWLCERSQEHRGHHTFLM) form a B box-type zinc finger. Zn(2+) is bound by residues Cys-97, His-100, Cys-119, and His-125. Residues 137–177 (AQEYHVKLQTALEMLRQKQQEAEKLEADIREEKASWKIQID) adopt a coiled-coil conformation. Residues 187–200 (FEQLREILDWEESN) are required for interaction with GABARAP and for autophagy. Residues 283–495 (LKGMLDMFRE…VPMTLCSPSS (213 aa)) enclose the B30.2/SPRY domain.

The protein belongs to the TRIM/RBCC family. Can form homodimers and homotrimers. In addition to lower-order dimerization, also exhibits a higher-order multimerization and both low- and high-order multimerizations are essential for its restriction activity. Interacts with BTBD1 and BTBD2. Interacts with PSMC4, PSMC5, PSMD7 and HSPA8/HSC70. Interacts (via B30.2/SPRY domain) with HSPA1A/B. Interacts with PSMC2, MAP3K7/TAK1, TAB2 and TAB3. Interacts with SQSTM1. Interacts with TRIM6 and TRIM34. Interacts with ULK1 (phosphorylated form), GABARAP, GABARAPL1, GABARAPL2, MAP1LC3A, MAP1LC3C and BECN1. In terms of processing, degraded in a proteasome-independent fashion in the absence of viral infection but in a proteasome-dependent fashion following exposure to restriction sensitive virus. Autoubiquitinated in a RING finger- and UBE2D2-dependent manner. Monoubiquitinated by TRIM21. Deubiquitinated by Yersinia YopJ. Ubiquitination may not lead to proteasomal degradation.

The protein localises to the cytoplasm. It localises to the nucleus. The enzyme catalyses S-ubiquitinyl-[E2 ubiquitin-conjugating enzyme]-L-cysteine + [acceptor protein]-L-lysine = [E2 ubiquitin-conjugating enzyme]-L-cysteine + N(6)-ubiquitinyl-[acceptor protein]-L-lysine.. It participates in protein modification; protein ubiquitination. Its function is as follows. Capsid-specific restriction factor that prevents infection from non-host-adapted retroviruses. Blocks viral replication early in the life cycle, after viral entry but before reverse transcription. In addition to acting as a capsid-specific restriction factor, also acts as a pattern recognition receptor that activates innate immune signaling in response to the retroviral capsid lattice. Binding to the viral capsid triggers its E3 ubiquitin ligase activity, and in concert with the heterodimeric ubiquitin conjugating enzyme complex UBE2V1-UBE2N (also known as UBC13-UEV1A complex) generates 'Lys-63'-linked polyubiquitin chains, which in turn are catalysts in the autophosphorylation of the MAP3K7/TAK1 complex (includes TAK1, TAB2, and TAB3). Activation of the MAP3K7/TAK1 complex by autophosphorylation results in the induction and expression of NF-kappa-B and MAPK-responsive inflammatory genes, thereby leading to an innate immune response in the infected cell. Plays a role in regulating autophagy through activation of autophagy regulator BECN1 by causing its dissociation from its inhibitors BCL2 and TAB2. This Erythrocebus patas (Red guenon) protein is Tripartite motif-containing protein 5 (TRIM5).